A 406-amino-acid polypeptide reads, in one-letter code: Nuclear hormone receptor family member nhr-133 (406 aa).

The segment at residues 8–83 (SGPCEICEQP…VGMNSSKFQN (76 aa)) is a DNA-binding region (nuclear receptor). The NR C4-type zinc finger occupies 11 to 31 (CEICEQPAHGNHFGVLSCRAC). The segment at 47–66 (DRVCRKGNCIGNDLYRCKIC) adopts an NR C4-type; degenerate zinc-finger fold. The NR LBD domain maps to 150 to 406 (YSWSPNHYPN…YSHPEMFEFS (257 aa)).

The protein belongs to the nuclear hormone receptor family.

It is found in the nucleus. Orphan nuclear receptor. The chain is Nuclear hormone receptor family member nhr-133 from Caenorhabditis elegans.